Reading from the N-terminus, the 108-residue chain is MMTLRDLINKLLGRETSSANTARERLQLVLAHDRVDMSSLTTDLLDKMRKEILDVVAKYVEIDFEEVAVSLETEDRMTALVANLPIKRTISGEIKFKKTDKANKDIKK.

This sequence belongs to the MinE family.

Prevents the cell division inhibition by proteins MinC and MinD at internal division sites while permitting inhibition at polar sites. This ensures cell division at the proper site by restricting the formation of a division septum at the midpoint of the long axis of the cell. This chain is Cell division topological specificity factor, found in Prochlorococcus marinus (strain MIT 9215).